Here is a 406-residue protein sequence, read N- to C-terminus: Putative phosphate permease TK2061 (406 aa).

10 helical membrane passes run 2 to 22 (AVMD…AWAI), 45 to 65 (AVLI…KSVT), 82 to 102 (TVLI…LVIA), 115 to 135 (IIGG…VNWG), 139 to 159 (QVVL…FLVF), 182 to 202 (FWIG…VLHG), 208 to 228 (GVLF…FLTL), 288 to 308 (VPVP…GVAT), 324 to 346 (LTNT…ASWL), and 385 to 405 (FVTV…LMIV).

It belongs to the inorganic phosphate transporter (PiT) (TC 2.A.20) family.

The protein resides in the cell membrane. Its function is as follows. Potential transporter for phosphate. This Thermococcus kodakarensis (strain ATCC BAA-918 / JCM 12380 / KOD1) (Pyrococcus kodakaraensis (strain KOD1)) protein is Putative phosphate permease TK2061.